The primary structure comprises 291 residues: Exosome complex component rrp45 (291 aa).

This sequence belongs to the RNase PH family. In terms of assembly, component of the RNA exosome complex. Specifically part of the catalytically inactive RNA exosome core complex (Exo-9) which may associate with the catalytic subunits rrp6 and dis3 in cytoplasmic- and nuclear-specific RNA exosome complex forms. Exo-9 is formed by a hexameric base ring of RNase PH domain-containing subunits and a cap ring consisting of csl4, rrp4 and rrp40.

The protein resides in the cytoplasm. The protein localises to the nucleus. It localises to the nucleolus. Non-catalytic component of the RNA exosome complex which has 3'-&gt;5' exoribonuclease activity and participates in a multitude of cellular RNA processing and degradation events. In the nucleus, the RNA exosome complex is involved in proper maturation of stable RNA species such as rRNA, snRNA and snoRNA, in the elimination of RNA processing by-products and non-coding 'pervasive' transcripts, such as antisense RNA species and cryptic unstable transcripts (CUTs), and of mRNAs with processing defects, thereby limiting or excluding their export to the cytoplasm. In the cytoplasm, the RNA exosome complex is involved in general mRNA turnover and in RNA surveillance pathways, preventing translation of aberrant mRNAs. The catalytic inactive RNA exosome core complex of 9 subunits (Exo-9) is proposed to play a pivotal role in the binding and presentation of RNA for ribonucleolysis, and to serve as a scaffold for the association with catalytic subunits and accessory proteins or complexes. ski6 is part of the hexameric ring of RNase PH domain-containing subunits proposed to form a central channel which threads RNA substrates for degradation. This chain is Exosome complex component rrp45 (rrp45), found in Schizosaccharomyces pombe (strain 972 / ATCC 24843) (Fission yeast).